We begin with the raw amino-acid sequence, 203 residues long: Translation initiation factor IF-3 (203 aa).

The span at 172–182 (EAPKNEKKTKE) shows a compositional bias: basic and acidic residues. The tract at residues 172–203 (EAPKNEKKTKENNPPFNRINLMKGENHAKNED) is disordered.

It belongs to the IF-3 family. Monomer.

The protein localises to the cytoplasm. Functionally, IF-3 binds to the 30S ribosomal subunit and shifts the equilibrium between 70S ribosomes and their 50S and 30S subunits in favor of the free subunits, thus enhancing the availability of 30S subunits on which protein synthesis initiation begins. The sequence is that of Translation initiation factor IF-3 from Helicobacter pylori (strain ATCC 700392 / 26695) (Campylobacter pylori).